The primary structure comprises 602 residues: Potassium voltage-gated channel subfamily A member 5 (602 aa).

Residues 1–107 (MEISLVPMEN…EDQAPQDSGS (107 aa)) are disordered. A tetramerization domain region spans residues 1 to 202 (MEISLVPMEN…FYQLGDEAME (202 aa)). Residues 1 to 238 (MEISLVPMEN…LIFEYPESSG (238 aa)) lie on the Cytoplasmic side of the membrane. Positions 66-78 (PLPPMPQELPQPR) are enriched in pro residues. Phosphoserine; by CK2 and PKA is present on Ser-81. A Glycyl lysine isopeptide (Lys-Gly) (interchain with G-Cter in SUMO) cross-link involves residue Lys-212. Residues 239–260 (SARAIAIVSVLVILISIITFCL) form a helical membrane-spanning segment. Topologically, residues 261 to 314 (ETLPEFRDERELLRHPPVPPQPPAPAPGANGSGSGVLSSGPTVAPLLPRTLADP) are extracellular. The tract at residues 274–297 (RHPPVPPQPPAPAPGANGSGSGVL) is disordered. The segment covering 276–286 (PPVPPQPPAPA) has biased composition (pro residues). Asn-290 carries an N-linked (GlcNAc...) asparagine glycan. The helical transmembrane segment at 315–336 (FFIVETTCVIWFTFELLVRFFA) threads the bilayer. Cys-337 is lipidated: S-palmitoyl cysteine. Over 337 to 347 (CPSKAEFSRNI) the chain is Cytoplasmic. The chain crosses the membrane as a helical span at residues 348-368 (MNIIDIVAIFPYFITLGTELA). Residues 369–384 (EQQPGGGGQNGQQAMS) lie on the Extracellular side of the membrane. A helical; Voltage-sensor transmembrane segment spans residues 385–405 (LAILRVIRLVRVFRIFKLSRH). At 406–420 (SKGLQILGKTLQASM) the chain is on the cytoplasmic side. Residues 407-420 (KGLQILGKTLQASM) are S4-S5 linker. The chain crosses the membrane as a helical span at residues 421 to 442 (RELGLLIFFLFIGVILFSSAVY). Residues 443–456 (FAEADNQGSHFSSI) are Extracellular-facing. Positions 457–468 (PDAFWWAVVTMT) form an intramembrane region, helical. Residues 469-474 (TVGYGD) carry the Selectivity filter motif. Residues 469 to 476 (TVGYGDMR) lie within the membrane without spanning it. Residues 477–483 (PITVGGK) lie on the Extracellular side of the membrane. A helical transmembrane segment spans residues 484 to 512 (IVGSLCAIAGVLTIALPVPVIVSNFNYFY). The Cytoplasmic portion of the chain corresponds to 513–602 (HRETDHEEQA…CLDTSRETDL (90 aa)). Lys-525 participates in a covalent cross-link: Glycyl lysine isopeptide (Lys-Gly) (interchain with G-Cter in SUMO). Residues Ser-535, Ser-546, and Ser-569 each carry the phosphoserine; by PKA modification. The PDZ-binding motif lies at 600-602 (TDL).

This sequence belongs to the potassium channel family. A (Shaker) (TC 1.A.1.2) subfamily. Kv1.5/KCNA5 sub-subfamily. In terms of assembly, homotetramer and heterotetramer of potassium channel proteins. Interacts with DLG1, which enhances channel currents. Forms a ternary complex with DLG1 and CAV3. Interacts with KCNAB1. Interacts with UBE2I. Interacts with XIRP2; the interaction is required for normal action potential configuration in the heart. Glycosylated. In terms of processing, sumoylated on Lys-212, and Lys-525, preferentially with SUMO3. Sumoylation regulates the voltage sensitivity of the channel. In terms of tissue distribution, expressed in the heart (at protein level). Expressed in the brain and weakly expressed in the thymus, skeletal muscle and spleen.

It is found in the cell membrane. The enzyme catalyses K(+)(in) = K(+)(out). Its function is as follows. Voltage-gated potassium channel that mediates transmembrane potassium transport in excitable membranes. Forms tetrameric potassium-selective channels through which potassium ions pass in accordance with their electrochemical gradient. The channel alternates between opened and closed conformations in response to the voltage difference across the membrane. Can form functional homotetrameric channels and heterotetrameric channels that contain variable proportions of KCNA1, KCNA2, KCNA4, KCNA5, and possibly other family members as well; channel properties depend on the type of alpha subunits that are part of the channel. Channel properties are modulated by cytoplasmic beta subunits that regulate the subcellular location of the alpha subunits and promote rapid inactivation. Homotetrameric channels display rapid activation and slow inactivation. Required for normal electrical conduction including formation of the infranodal ventricular conduction system and normal action potential configuration, as a result of its interaction with XIRP2. May play a role in regulating the secretion of insulin in normal pancreatic islets. Voltage-gated potassium channel that mediates transmembrane potassium transport in excitable membranes. Forms tetrameric potassium-selective channels through which potassium ions pass in accordance with their electrochemical gradient. The channel alternates between opened and closed conformations in response to the voltage difference across the membrane. Functionally, inactive. Inhibits expression of isoform 1 and isoform 2. This chain is Potassium voltage-gated channel subfamily A member 5 (Kcna5), found in Mus musculus (Mouse).